The following is a 465-amino-acid chain: UDP-N-acetylmuramate--L-alanine ligase (465 aa).

112–118 (GTHGKTT) is an ATP binding site.

The protein belongs to the MurCDEF family.

It localises to the cytoplasm. The enzyme catalyses UDP-N-acetyl-alpha-D-muramate + L-alanine + ATP = UDP-N-acetyl-alpha-D-muramoyl-L-alanine + ADP + phosphate + H(+). It participates in cell wall biogenesis; peptidoglycan biosynthesis. In terms of biological role, cell wall formation. The polypeptide is UDP-N-acetylmuramate--L-alanine ligase (Burkholderia orbicola (strain MC0-3)).